The chain runs to 526 residues: MSKTSNKSSADSKNDAKAEDIVNGENQIATNESQSSDSAAVSERVVEPKTTVQKKFRIESDLLGELQIPSHAYYGVHTLRAVDNFQISRTTINHVPDFIRGMVQVKKAAALANRRLHTLPAQKAEAIVWACDQILIEERCMDQFPIDVFQGGAGTSLNMNTNEVVANLALEFLGHEKGEYHILHPMDDVNMSQSTNDSYPTGFRLGIYAGLQTLIAEIDELQVAFRHKGNEFVDIIKMGRTQLQDAVPMSLGEEFRAFAHNLAEEQTVLREAANRLLEVNLGATAIGTGVNTPAGYRHQVVAALSEVTGLELKSARDLIEATSDTGAYVHAHSAIKRAAMKLSKICNDLRLLSSGPRAGLNEINLPPRQAGSSIMPAKVNPVIPEVVNQVCFKVFGNDLTVTMAAEAGQLQLNVMEPVIGESLFQSLRILGNAAKTLREKCVVGITANADVCRAYVDNSIGIITYLNPFLGHDIGDQIGKEAAETGRPVRELILEKKLMDEKTLEAVLSKENLMHPMFRGRLYLEN.

The segment at 1-44 (MSKTSNKSSADSKNDAKAEDIVNGENQIATNESQSSDSAAVSER) is disordered. Over residues 10-20 (ADSKNDAKAED) the composition is skewed to basic and acidic residues. The span at 24 to 39 (GENQIATNESQSSDSA) shows a compositional bias: polar residues. Residues threonine 155, serine 194, threonine 195, asparagine 196, and threonine 241 each contribute to the L-aspartate site. Residues 371-380 (GSSIMPAKVN) are SS loop. Serine 372 acts as the Proton acceptor in catalysis. The L-aspartate site is built by serine 373 and lysine 378.

This sequence belongs to the class-II fumarase/aspartase family. Aspartase subfamily. Homotetramer.

It carries out the reaction L-aspartate = fumarate + NH4(+). Its function is as follows. Catalyzes the reversible conversion of L-aspartate to fumarate and ammonia. The sequence is that of Aspartate ammonia-lyase from Corynebacterium glutamicum (strain ATCC 13032 / DSM 20300 / JCM 1318 / BCRC 11384 / CCUG 27702 / LMG 3730 / NBRC 12168 / NCIMB 10025 / NRRL B-2784 / 534).